A 310-amino-acid chain; its full sequence is Lipoyl synthase (310 aa).

Cysteine 54, cysteine 59, cysteine 65, cysteine 80, cysteine 84, cysteine 87, and serine 295 together coordinate [4Fe-4S] cluster. Residues 66–284 (FASGTATFLI…LFGEDNLGFM (219 aa)) enclose the Radical SAM core domain.

Belongs to the radical SAM superfamily. Lipoyl synthase family. The cofactor is [4Fe-4S] cluster.

It localises to the cytoplasm. The catalysed reaction is [[Fe-S] cluster scaffold protein carrying a second [4Fe-4S](2+) cluster] + N(6)-octanoyl-L-lysyl-[protein] + 2 oxidized [2Fe-2S]-[ferredoxin] + 2 S-adenosyl-L-methionine + 4 H(+) = [[Fe-S] cluster scaffold protein] + N(6)-[(R)-dihydrolipoyl]-L-lysyl-[protein] + 4 Fe(3+) + 2 hydrogen sulfide + 2 5'-deoxyadenosine + 2 L-methionine + 2 reduced [2Fe-2S]-[ferredoxin]. The protein operates within protein modification; protein lipoylation via endogenous pathway; protein N(6)-(lipoyl)lysine from octanoyl-[acyl-carrier-protein]: step 2/2. Catalyzes the radical-mediated insertion of two sulfur atoms into the C-6 and C-8 positions of the octanoyl moiety bound to the lipoyl domains of lipoate-dependent enzymes, thereby converting the octanoylated domains into lipoylated derivatives. In Prochlorococcus marinus (strain MIT 9215), this protein is Lipoyl synthase.